Here is an 865-residue protein sequence, read N- to C-terminus: DNA mismatch repair protein MutS (865 aa).

Position 605 to 612 (605 to 612 (GPNMAGKS)) interacts with ATP. A disordered region spans residues 814–833 (PEPLEAYKPKGNKQPLSDEE).

This sequence belongs to the DNA mismatch repair MutS family.

Functionally, this protein is involved in the repair of mismatches in DNA. It is possible that it carries out the mismatch recognition step. This protein has a weak ATPase activity. This chain is DNA mismatch repair protein MutS, found in Halalkalibacterium halodurans (strain ATCC BAA-125 / DSM 18197 / FERM 7344 / JCM 9153 / C-125) (Bacillus halodurans).